A 233-amino-acid polypeptide reads, in one-letter code: 5'-methylthioadenosine/S-adenosylhomocysteine nucleosidase (233 aa).

Glu-12 serves as the catalytic Proton acceptor. Substrate-binding positions include Gly-78, Ile-156, and 177–178; that span reads ME. Catalysis depends on Asp-201, which acts as the Proton donor.

The protein belongs to the PNP/UDP phosphorylase family. MtnN subfamily.

It catalyses the reaction S-adenosyl-L-homocysteine + H2O = S-(5-deoxy-D-ribos-5-yl)-L-homocysteine + adenine. It carries out the reaction S-methyl-5'-thioadenosine + H2O = 5-(methylsulfanyl)-D-ribose + adenine. The enzyme catalyses 5'-deoxyadenosine + H2O = 5-deoxy-D-ribose + adenine. Its pathway is amino-acid biosynthesis; L-methionine biosynthesis via salvage pathway; S-methyl-5-thio-alpha-D-ribose 1-phosphate from S-methyl-5'-thioadenosine (hydrolase route): step 1/2. Functionally, catalyzes the irreversible cleavage of the glycosidic bond in both 5'-methylthioadenosine (MTA) and S-adenosylhomocysteine (SAH/AdoHcy) to adenine and the corresponding thioribose, 5'-methylthioribose and S-ribosylhomocysteine, respectively. Also cleaves 5'-deoxyadenosine, a toxic by-product of radical S-adenosylmethionine (SAM) enzymes, into 5-deoxyribose and adenine. This Listeria monocytogenes serotype 4a (strain HCC23) protein is 5'-methylthioadenosine/S-adenosylhomocysteine nucleosidase.